A 178-amino-acid chain; its full sequence is MGFGSFISTITYCLFFRYPHKKPKFKSVSHLNHYHTMPMARPLSLQTIDLKVRMCCSGCERVVKHAIYKLRGVDSVEVNLEMERVTVVGYVERKKVLKAVRRAGKRAEFWPYPDMPRYFTSSDHYFKDTTREFRESYNYYRHGYNLSDRHGNIHVTNRGDDKMSNFFNDDNVHACSLM.

The HMA domain occupies leucine 45–glutamate 108. 2 residues coordinate a metal cation: cysteine 56 and cysteine 59. Cysteine 175 is subject to Cysteine methyl ester. Cysteine 175 carries S-farnesyl cysteine lipidation. Residues serine 176–methionine 178 constitute a propeptide, removed in mature form.

It belongs to the HIPP family. In terms of assembly, interacts with ZHD3/HB21, ZHD11/HB29 and ZHD8/HB30.

Functionally, heavy-metal-binding protein. The sequence is that of Heavy metal-associated isoprenylated plant protein 30 from Arabidopsis thaliana (Mouse-ear cress).